A 413-amino-acid polypeptide reads, in one-letter code: MDSTIFEIIIDEFDANCSLLDAFQDSFLHSESSSFFGFEGPYCSATIDQIGTCWPRSLAGELVERPCPDSFNGIRYNTTRNVYRECFENGTWASWMNYSQCVPILDNKRKYALHYKIALIINYLGHCISILALVIAFLLFLCLRSIRCLRNIIHWNLITTFILRNIMWFLLQMIDHNIHESNEVWCRCITTIYNYFVVTNFFWMFVEGCYLHTAIVMTYSTDKLRKWVFLFIGWCIPSPIIVTWAICKLFYENEQCWIGKEPGKYIDYIYQGRVILVLLINFVFLFNIVRILMTKLRASTTSETIQYRKAVKATLVLLPLLGITYMLFFVNPGEDDVSQIVFIYFNSFLQSFQGFFVSVFYCFLNGEVRSAARKRWHRWQDHHSLRVRVARAMSIPTSPTRISFHSIKQTAAV.

Positions 1–22 form a signal peptide, not cleaved; that stretch reads MDSTIFEIIIDEFDANCSLLDA. The Extracellular segment spans residues 1-110; the sequence is MDSTIFEIII…CVPILDNKRK (110 aa). The N-linked (GlcNAc...) asparagine glycan is linked to N16. 3 disulfides stabilise this stretch: C17–C53, C43–C86, and C67–C101. N77, N89, and N97 each carry an N-linked (GlcNAc...) asparagine glycan. The chain crosses the membrane as a helical span at residues 111 to 141; the sequence is YALHYKIALIINYLGHCISILALVIAFLLFL. The Cytoplasmic portion of the chain corresponds to 142-148; the sequence is CLRSIRC. A helical membrane pass occupies residues 149–173; that stretch reads LRNIIHWNLITTFILRNIMWFLLQM. Over 174–187 the chain is Extracellular; sequence IDHNIHESNEVWCR. C186 and C256 are disulfide-bonded. Residues 188–216 traverse the membrane as a helical segment; sequence CITTIYNYFVVTNFFWMFVEGCYLHTAIV. Residues 217-223 are Cytoplasmic-facing; that stretch reads MTYSTDK. A helical membrane pass occupies residues 224-251; the sequence is LRKWVFLFIGWCIPSPIIVTWAICKLFY. Over 252–267 the chain is Extracellular; the sequence is ENEQCWIGKEPGKYID. The chain crosses the membrane as a helical span at residues 268 to 293; sequence YIYQGRVILVLLINFVFLFNIVRILM. Residues 294–304 are Cytoplasmic-facing; that stretch reads TKLRASTTSET. Residues 305–329 traverse the membrane as a helical segment; sequence IQYRKAVKATLVLLPLLGITYMLFF. The Extracellular portion of the chain corresponds to 330-336; the sequence is VNPGEDD. The chain crosses the membrane as a helical span at residues 337–366; the sequence is VSQIVFIYFNSFLQSFQGFFVSVFYCFLNG. Residues 367-413 lie on the Cytoplasmic side of the membrane; that stretch reads EVRSAARKRWHRWQDHHSLRVRVARAMSIPTSPTRISFHSIKQTAAV.

The protein belongs to the G-protein coupled receptor 2 family. An N-glycosylation site within the signal peptide impedes its proper cleavage and function.

The protein resides in the cell membrane. In terms of biological role, G-protein coupled receptor for CRH (corticotropin-releasing factor), UCN (urocortin), UCN2 and UCN3. Has high affinity for UCN. Ligand binding causes a conformation change that triggers signaling via guanine nucleotide-binding proteins (G proteins) and down-stream effectors, such as adenylate cyclase. Promotes the activation of adenylate cyclase, leading to increased intracellular cAMP levels. In Xenopus laevis (African clawed frog), this protein is Corticotropin-releasing factor receptor 2 (crhr2).